The following is a 154-amino-acid chain: Myoglobin (154 aa).

Residues 2-148 (GLSDGEWQMV…FRNDIAAKYK (147 aa)) enclose the Globin domain. A phosphoserine mark is found at Ser-4 and Ser-32. A nitrite-binding site is contributed by His-65. An O2-binding site is contributed by His-65. At Thr-68 the chain carries Phosphothreonine. His-94 lines the heme b pocket. Residues Ser-121 and Ser-133 each carry the phosphoserine modification.

It belongs to the globin family. In terms of assembly, monomeric.

The protein resides in the cytoplasm. The protein localises to the sarcoplasm. It catalyses the reaction Fe(III)-heme b-[protein] + nitric oxide + H2O = Fe(II)-heme b-[protein] + nitrite + 2 H(+). The catalysed reaction is H2O2 + AH2 = A + 2 H2O. Its function is as follows. Monomeric heme protein which primary function is to store oxygen and facilitate its diffusion within muscle tissues. Reversibly binds oxygen through a pentacoordinated heme iron and enables its timely and efficient release as needed during periods of heightened demand. Depending on the oxidative conditions of tissues and cells, and in addition to its ability to bind oxygen, it also has a nitrite reductase activity whereby it regulates the production of bioactive nitric oxide. Under stress conditions, like hypoxia and anoxia, it also protects cells against reactive oxygen species thanks to its pseudoperoxidase activity. The protein is Myoglobin of Rattus norvegicus (Rat).